The sequence spans 472 residues: Methanethiol oxidase (472 aa).

Belongs to the selenium-binding protein family.

It is found in the nucleus. The protein localises to the cytoplasm. It localises to the cytosol. The protein resides in the membrane. It catalyses the reaction methanethiol + O2 + H2O = hydrogen sulfide + formaldehyde + H2O2 + H(+). The protein operates within organosulfur degradation. In terms of biological role, catalyzes the oxidation of methanethiol, an organosulfur compound known to be produced in substantial amounts by gut bacteria. Selenium-binding protein which may be involved in the sensing of reactive xenobiotics in the cytoplasm. May be involved in intra-Golgi protein transport. This Xenopus laevis (African clawed frog) protein is Methanethiol oxidase (selenbp1-b).